A 1057-amino-acid polypeptide reads, in one-letter code: DNA-directed RNA polymerase subunit beta' (1057 aa).

The Zn(2+) site is built by cysteine 60, cysteine 62, cysteine 75, and cysteine 78. Mg(2+) is bound by residues aspartate 449, aspartate 451, and aspartate 453. Zn(2+) is bound by residues cysteine 822, cysteine 896, cysteine 903, and cysteine 906.

This sequence belongs to the RNA polymerase beta' chain family. The RNAP catalytic core consists of 2 alpha, 1 beta, 1 beta' and 1 omega subunit. When a sigma factor is associated with the core the holoenzyme is formed, which can initiate transcription. It depends on Mg(2+) as a cofactor. The cofactor is Zn(2+).

The catalysed reaction is RNA(n) + a ribonucleoside 5'-triphosphate = RNA(n+1) + diphosphate. Functionally, DNA-dependent RNA polymerase catalyzes the transcription of DNA into RNA using the four ribonucleoside triphosphates as substrates. The polypeptide is DNA-directed RNA polymerase subunit beta' (Staphylococcus aureus).